A 49-amino-acid polypeptide reads, in one-letter code: Large ribosomal subunit protein bL32c (49 aa).

A disordered region spans residues 1–23 (MTPKKRKSKSKKNLRKTNWKKKA).

It belongs to the bacterial ribosomal protein bL32 family.

The protein resides in the plastid. The protein localises to the chloroplast. The chain is Large ribosomal subunit protein bL32c from Oltmannsiellopsis viridis (Marine flagellate).